The chain runs to 49 residues: Delta-actitoxin-Axm1a (49 aa).

3 disulfide bridges follow: Cys4–Cys46, Cys6–Cys36, and Cys29–Cys47.

Belongs to the sea anemone sodium channel inhibitory toxin family. Type I subfamily.

The protein resides in the secreted. Its subcellular location is the nematocyst. Its function is as follows. Binds specifically to voltage-gated sodium channels (Nav) (site 3), thereby delaying their inactivation. This toxin retains the greatest capacity to discriminate between the cardiac (Nav1.5/SCN5A) and neuronal sodium channels (2.5 nM versus 120 nM, when electrophysiologically tested and 14 nM versus 400 nM, when tested by ion flux), whereas its paralog Anthopleurin-B has the highest affinity of all anemone toxins for the mammalian sodium channel. Its ability to differentiate between cardiac and skeletal channels appears to be associated with domain 4 of the channel. This toxin does not slow or inhibit closed-state inactivation of cardiac sodium channels, but selectively modifies inactivation from the open-state. It does not display phospholipid-binding activities, suggesting that the domain IV S3-S4 linker is located at the extracellular surface and not buried in the phospholipid bilayer. This chain is Delta-actitoxin-Axm1a, found in Anthopleura xanthogrammica (Giant green sea anemone).